A 584-amino-acid polypeptide reads, in one-letter code: Insulin-like growth factor 2 mRNA-binding protein 3 (584 aa).

2 RRM domains span residues N2 to P75 and R81 to D156. The tract at residues A160–L199 is disordered. A compositionally biased stretch (polar residues) spans S184 to Q194. 4 consecutive KH domains span residues D196 to I261, E277 to I344, S409 to I474, and K491 to I557.

It belongs to the RRM IMP/VICKZ family. Homodimer and multimer.

It localises to the cytoplasm. It is found in the nucleus. Its subcellular location is the P-body. The protein localises to the stress granule. RNA-binding factor that may recruit target transcripts to cytoplasmic protein-RNA complexes (mRNPs). This transcript 'caging' into mRNPs allows mRNA transport and transient storage. It also modulates the rate and location at which target transcripts encounter the translational apparatus and shields them from endonuclease attacks or microRNA-mediated degradation. Preferentially binds to N6-methyladenosine (m6A)-containing mRNAs and increases their stability. The sequence is that of Insulin-like growth factor 2 mRNA-binding protein 3 (IGF2BP3) from Gallus gallus (Chicken).